Reading from the N-terminus, the 96-residue chain is Large ribosomal subunit protein bL21 (96 aa).

It belongs to the bacterial ribosomal protein bL21 family. Part of the 50S ribosomal subunit. Contacts protein L20.

In terms of biological role, this protein binds to 23S rRNA in the presence of protein L20. In Hydrogenobaculum sp. (strain Y04AAS1), this protein is Large ribosomal subunit protein bL21.